A 153-amino-acid chain; its full sequence is MNVGVAHSEVNPNTRVMNSRGMWLTYALGVGMLHIVLLSIPFFSVPVAWTLTNVIHNLGMYVFLHAVKGTPFETPDQGKARLLTHWEQLDYGVQFTSSRKFLTISPIILYFLASFYTKYDPTHFFINTASLLSVLIPKLPQLHGVRIFGINKY.

Over 1 to 26 the chain is Cytoplasmic; the sequence is MNVGVAHSEVNPNTRVMNSRGMWLTY. 2 consecutive transmembrane segments (helical) span residues 27–46 and 47–67; these read ALGVGMLHIVLLSIPFFSVP and VAWTLTNVIHNLGMYVFLHAV. Residues 68–100 lie on the Cytoplasmic side of the membrane; the sequence is KGTPFETPDQGKARLLTHWEQLDYGVQFTSSRK. The chain crosses the membrane as a helical span at residues 101 to 121; that stretch reads FLTISPIILYFLASFYTKYDP. The Extracellular segment spans residues 122 to 123; it reads TH. A helical transmembrane segment spans residues 124 to 144; the sequence is FFINTASLLSVLIPKLPQLHG. Residues 145–153 are Cytoplasmic-facing; that stretch reads VRIFGINKY.

Belongs to the ORM family. In terms of assembly, ceramide-sensitive subunit of the serine palmitoyltransferase (SPT) complex, which is also composed of SPTLC1, SPTLC2/3 and SPTSSA/B.

It localises to the endoplasmic reticulum membrane. Functionally, plays an essential role in the homeostatic regulation of sphingolipid de novo biosynthesis by modulating the activity of the serine palmitoyltransferase (SPT) in response to ceramide levels. When complexed to SPT, the binding of ceramides to its N-terminus stabilizes a conformation that block SPT substrate entry, hence preventing SPT catalytic activity. Through this mechanism, maintains ceramide levels at sufficient concentrations for the production of complex sphingolipids, but which prevents the accumulation of ceramides to levels that trigger apoptosis. This chain is ORM1-like protein 1 (ormdl1), found in Xenopus laevis (African clawed frog).